A 438-amino-acid polypeptide reads, in one-letter code: Aspartate--tRNA(Asp/Asn) ligase (438 aa).

E176 provides a ligand contact to L-aspartate. The interval Q198–K201 is aspartate. R220 contacts L-aspartate. Residues R220–E222, R228–L230, and E361 each bind ATP. 2 residues coordinate Mg(2+): E361 and S364. L-aspartate is bound by residues S364 and R368. An ATP-binding site is contributed by G409–R412.

Belongs to the class-II aminoacyl-tRNA synthetase family. Type 2 subfamily. In terms of assembly, homodimer. Requires Mg(2+) as cofactor.

It localises to the cytoplasm. It carries out the reaction tRNA(Asx) + L-aspartate + ATP = L-aspartyl-tRNA(Asx) + AMP + diphosphate. In terms of biological role, aspartyl-tRNA synthetase with relaxed tRNA specificity since it is able to aspartylate not only its cognate tRNA(Asp) but also tRNA(Asn). Reaction proceeds in two steps: L-aspartate is first activated by ATP to form Asp-AMP and then transferred to the acceptor end of tRNA(Asp/Asn). The sequence is that of Aspartate--tRNA(Asp/Asn) ligase from Methanococcus maripaludis (strain C5 / ATCC BAA-1333).